The primary structure comprises 88 residues: Sec-independent protein translocase protein TatA (88 aa).

The chain crosses the membrane as a helical span at residues 1-21 (MGSLSPWHWVVLVVVVVLLFG). Residues 49-71 (ENQAQASALETPMQNPTVVQSQR) show a composition bias toward polar residues. The interval 49–88 (ENQAQASALETPMQNPTVVQSQRVVPPWSTEQDHTEARPA) is disordered. Over residues 79–88 (EQDHTEARPA) the composition is skewed to basic and acidic residues.

The protein belongs to the TatA/E family. In terms of assembly, the Tat system comprises two distinct complexes: a TatABC complex, containing multiple copies of TatA, TatB and TatC subunits, and a separate TatA complex, containing only TatA subunits. Substrates initially bind to the TatABC complex, which probably triggers association of the separate TatA complex to form the active translocon.

The protein localises to the cell membrane. Part of the twin-arginine translocation (Tat) system that transports large folded proteins containing a characteristic twin-arginine motif in their signal peptide across membranes. TatA could form the protein-conducting channel of the Tat system. The protein is Sec-independent protein translocase protein TatA of Mycobacterium leprae (strain TN).